The chain runs to 276 residues: Large ribosomal subunit protein uL2 (276 aa).

Disordered stretches follow at residues 14–58 (RNAS…GGGH) and 221–276 (TRGE…KNRK). Residues 16 to 27 (ASVSDFSELTRS) are compositionally biased toward polar residues. Over residues 255–276 (RRPKKASNKMIVRRRPSGKNRK) the composition is skewed to basic residues.

This sequence belongs to the universal ribosomal protein uL2 family. As to quaternary structure, part of the 50S ribosomal subunit. Forms a bridge to the 30S subunit in the 70S ribosome.

Functionally, one of the primary rRNA binding proteins. Required for association of the 30S and 50S subunits to form the 70S ribosome, for tRNA binding and peptide bond formation. It has been suggested to have peptidyltransferase activity; this is somewhat controversial. Makes several contacts with the 16S rRNA in the 70S ribosome. The protein is Large ribosomal subunit protein uL2 of Bifidobacterium longum subsp. infantis (strain ATCC 15697 / DSM 20088 / JCM 1222 / NCTC 11817 / S12).